A 301-amino-acid polypeptide reads, in one-letter code: Cytochrome c biogenesis protein CcsA (301 aa).

8 helical membrane passes run 13–33 (NNIT…GLIF), 39–59 (VFYI…IILG), 73–93 (LYES…YLEY), 97–117 (LYLI…FSTL), 146–166 (MLSY…LVLI), 209–229 (TIGF…VWAN), 236–256 (WSWD…AAYL), and 270–290 (AYLA…VNFL).

It belongs to the CcmF/CycK/Ccl1/NrfE/CcsA family. May interact with Ccs1.

The protein resides in the plastid. Its subcellular location is the chloroplast thylakoid membrane. Required during biogenesis of c-type cytochromes (cytochrome c6 and cytochrome f) at the step of heme attachment. The polypeptide is Cytochrome c biogenesis protein CcsA (Guillardia theta (Cryptophyte)).